Consider the following 197-residue polypeptide: Imidazoleglycerol-phosphate dehydratase (197 aa).

Belongs to the imidazoleglycerol-phosphate dehydratase family.

It is found in the cytoplasm. The enzyme catalyses D-erythro-1-(imidazol-4-yl)glycerol 3-phosphate = 3-(imidazol-4-yl)-2-oxopropyl phosphate + H2O. It participates in amino-acid biosynthesis; L-histidine biosynthesis; L-histidine from 5-phospho-alpha-D-ribose 1-diphosphate: step 6/9. The polypeptide is Imidazoleglycerol-phosphate dehydratase (Stutzerimonas stutzeri (strain A1501) (Pseudomonas stutzeri)).